Consider the following 81-residue polypeptide: Protein PYP1 (81 aa).

The transit peptide at 1–25 (MAFVSGFTGMPVTARVSKAVCRTRM) directs the protein to the chloroplast. The segment at 27–57 (LEGGKSSGGGEATRDPEPTAVDPNDPKGKQQ) is disordered.

The protein localises to the plastid. The protein resides in the chloroplast. This is Protein PYP1 from Pyropia yezoensis (Susabi-nori).